A 618-amino-acid polypeptide reads, in one-letter code: Rho guanine nucleotide exchange factor 25 (618 aa).

Disordered stretches follow at residues 26–63 (CAVPGQEGPPERDPLGPGSTKTESDCIEEDQTGQREPE) and 169–193 (GPGDKAQPAEEETLSQAPKNEEEQK). The 177-residue stretch at 199-375 (RSMFVLGELV…CFVPKRCNDM (177 aa)) folds into the DH domain. Residues 317–338 (LGHRLQLNDLLIKPVQRIMKYQ) are important for binding to Rho GTPases. Positions 387-505 (KLTAQGKLLG…WIKQVAQILE (119 aa)) constitute a PH domain. The interval 506–532 (SQRDFLNALQSPIEYQRRESQTNSLGR) is sufficient to bind activated GNAQ. Disordered stretches follow at residues 521–556 (QRRESQTNSLGRPGGPWVGSPGRMRPGDLAQASMHT) and 584–604 (ALSDTPQTPHDSPALPTVNTP). Residues 584–593 (ALSDTPQTPH) show a composition bias toward polar residues.

Interacts with activated GNAQ and GNA11. Interacts (via the DH domain) with POPDC1 (via the C-terminus cytoplasmic tail). Interacts with RHOA, CDC42 and RAC1. As to expression, highly expressed in excitable tissues, such as brain, heart and muscle. Elevated expression in hippocampus and cerebellum.

The protein localises to the cytoplasm. It localises to the myofibril. Its subcellular location is the sarcomere. The protein resides in the cell membrane. In terms of biological role, may play a role in actin cytoskeleton reorganization in different tissues since its activation induces formation of actin stress fibers. It works as a guanine nucleotide exchange factor for Rho family of small GTPases. Links specifically G alpha q/11-coupled receptors to RHOA activation. May be an important regulator of processes involved in axon and dendrite formation. In neurons seems to be an exchange factor primarily for RAC1. Involved in skeletal myogenesis. This chain is Rho guanine nucleotide exchange factor 25 (Arhgef25), found in Mus musculus (Mouse).